The sequence spans 700 residues: Acyl-coenzyme A oxidase 3 (700 aa).

The protein belongs to the acyl-CoA oxidase family. As to quaternary structure, heteropentamer composed of five different subunits. FAD is required as a cofactor.

Its subcellular location is the peroxisome. It catalyses the reaction a 2,3-saturated acyl-CoA + O2 = a (2E)-enoyl-CoA + H2O2. Its pathway is lipid metabolism; peroxisomal fatty acid beta-oxidation. In terms of biological role, oxidizes aliphatic acyl-CoA substrates of different chain lengths such as hexanoyl-CoA, decanoyl-CoA and myristoyl-CoA as well as aromatic/heterocyclic ring-substituted chromogenic substrates, such as furylpropionyl-CoA. Of the above substrates, the efficiency of the enzyme, exhibits the following order: decanoyl-CoA &gt; myristoyl-CoA &gt; hexanoyl-CoA &gt; furyl-propionyl-CoA. The sequence is that of Acyl-coenzyme A oxidase 3 (POX3) from Yarrowia lipolytica (strain CLIB 122 / E 150) (Yeast).